Consider the following 357-residue polypeptide: DNA polymerase IV 2 (357 aa).

The UmuC domain maps to 4-184 (IIHVDMDAFY…LAVKKFHGVG (181 aa)). Residues Asp8 and Asp102 each contribute to the Mg(2+) site. Residue Glu103 is part of the active site.

It belongs to the DNA polymerase type-Y family. As to quaternary structure, monomer. Mg(2+) serves as cofactor.

Its subcellular location is the cytoplasm. The enzyme catalyses DNA(n) + a 2'-deoxyribonucleoside 5'-triphosphate = DNA(n+1) + diphosphate. Poorly processive, error-prone DNA polymerase involved in untargeted mutagenesis. Copies undamaged DNA at stalled replication forks, which arise in vivo from mismatched or misaligned primer ends. These misaligned primers can be extended by PolIV. Exhibits no 3'-5' exonuclease (proofreading) activity. May be involved in translesional synthesis, in conjunction with the beta clamp from PolIII. The polypeptide is DNA polymerase IV 2 (dinB2) (Agrobacterium fabrum (strain C58 / ATCC 33970) (Agrobacterium tumefaciens (strain C58))).